The following is a 246-amino-acid chain: ATP synthase subunit a, chloroplastic (246 aa).

5 helical membrane passes run 35-55 (GQVL…GLIA), 94-114 (VPFI…GALL), 132-152 (DINT…YAGI), 198-218 (LVVG…VMLL), and 219-239 (GVFT…AYIG).

It belongs to the ATPase A chain family. In terms of assembly, F-type ATPases have 2 components, CF(1) - the catalytic core - and CF(0) - the membrane proton channel. CF(1) has five subunits: alpha(3), beta(3), gamma(1), delta(1), epsilon(1). CF(0) has four main subunits: a, b, b' and c.

The protein resides in the plastid. Its subcellular location is the chloroplast thylakoid membrane. Key component of the proton channel; it plays a direct role in the translocation of protons across the membrane. This chain is ATP synthase subunit a, chloroplastic, found in Stigeoclonium helveticum (Green alga).